We begin with the raw amino-acid sequence, 317 residues long: MSFSSEVKEELVKKTDSARHCQIAEFAAFMGMSGNVSETDNGELCLEFVTENELSVEKFSDLLLRIFSIKMDADTNEMVKNGKETIIRITRQSDVAKILQTLKWCDDRFTQIEPVFVDARIVAMDCCKKAFIRGAFMERGSISDPNKFYHYEIVCKYEEDADILMDMLRFFGLDAKVIVRKNSFVVYMKEGNNITDTLNLMGAVVSQMNLYNVMILKGISNDVNRKVNCETANLNKTIEAAVKQIKDIELIRDTVGLDSLSDSLMQVALLRLENPDMSLQGLGELLDPQVGKSGVNHRLRKIGEKADELRQSMGISV.

The H-T-H motif DNA-binding region spans 278–311 (SLQGLGELLDPQVGKSGVNHRLRKIGEKADELRQ).

It belongs to the WhiA family.

Involved in cell division and chromosome segregation. The protein is Probable cell division protein WhiA of Lachnospira eligens (strain ATCC 27750 / DSM 3376 / VPI C15-48 / C15-B4) (Eubacterium eligens).